Consider the following 162-residue polypeptide: ATP synthase subunit b (162 aa).

Residues 10–29 (LIWTIINFAVLLWGMHRFLY) form a helical membrane-spanning segment.

This sequence belongs to the ATPase B chain family. In terms of assembly, F-type ATPases have 2 components, F(1) - the catalytic core - and F(0) - the membrane proton channel. F(1) has five subunits: alpha(3), beta(3), gamma(1), delta(1), epsilon(1). F(0) has three main subunits: a(1), b(2) and c(10-14). The alpha and beta chains form an alternating ring which encloses part of the gamma chain. F(1) is attached to F(0) by a central stalk formed by the gamma and epsilon chains, while a peripheral stalk is formed by the delta and b chains.

It is found in the cell membrane. Functionally, f(1)F(0) ATP synthase produces ATP from ADP in the presence of a proton or sodium gradient. F-type ATPases consist of two structural domains, F(1) containing the extramembraneous catalytic core and F(0) containing the membrane proton channel, linked together by a central stalk and a peripheral stalk. During catalysis, ATP synthesis in the catalytic domain of F(1) is coupled via a rotary mechanism of the central stalk subunits to proton translocation. Component of the F(0) channel, it forms part of the peripheral stalk, linking F(1) to F(0). This chain is ATP synthase subunit b, found in Symbiobacterium thermophilum (strain DSM 24528 / JCM 14929 / IAM 14863 / T).